The sequence spans 385 residues: GDP-mannose-dependent alpha-(1-6)-phosphatidylinositol monomannoside mannosyltransferase (385 aa).

Positions 205, 210, 262, and 299 each coordinate GDP-alpha-D-mannose.

It belongs to the glycosyltransferase group 1 family. Glycosyltransferase 4 subfamily.

The enzyme catalyses a 1,2-diacyl-sn-glycero-3-phospho-[alpha-D-mannopyranosyl-(1&lt;-&gt;6)-D-myo-inositol] + GDP-alpha-D-mannose = a 2,6-O-bis(alpha-D-mannopyranosyl)-1-phosphatidyl-1D-myo-inositol + GDP + H(+). It carries out the reaction a 1,2-diacyl-sn-glycero-3-phospho-[alpha-D-6-acyl-mannopyranosyl-(1&lt;-&gt;6)-D-myo-inositol] + GDP-alpha-D-mannose = a 2-O-(alpha-D-mannosyl)-6-O-(6-O-acyl-alpha-D-mannosyl)-1-phosphatidyl-1D-myo-inositol + GDP + H(+). Its pathway is phospholipid metabolism; phosphatidylinositol metabolism. Functionally, involved in the biosynthesis of phosphatidyl-myo-inositol mannosides (PIM) which are early precursors in the biosynthesis of lipomannans (LM) and lipoarabinomannans (LAM). Catalyzes the addition of a mannosyl residue from GDP-D-mannose (GDP-Man) to the position 6 of a phosphatidyl-myo-inositol bearing an alpha-1,2-linked mannose residue (PIM1) to generate phosphatidyl-myo-inositol bearing alpha-1,2- and alpha-1,6-linked mannose residues (Ac1PIM2). PimB also catalyzes the addition of a mannosyl residue from GDP-Man to the position 6 of phosphatidyl-myo-inositol bearing an acylated alpha-1,2-linked mannose residue (Ac1PIM1) to generate monoacylated phosphatidyl-myo-inositol bearing alpha-1,2- and alpha-1,6-linked mannose residues (Ac1PIM2). The addition of the second mannosyl residue by PimB preferentially occurs before the acylation of the mannosyl residue transferred by PimA. Also able to transfer a mannosyl residue from GDP-Man to the position 6 of a phosphatidyl-myo-inositol (PI), but this reaction is very slow. The chain is GDP-mannose-dependent alpha-(1-6)-phosphatidylinositol monomannoside mannosyltransferase from Mycobacterium tuberculosis (strain CDC 1551 / Oshkosh).